We begin with the raw amino-acid sequence, 1462 residues long: DNA topoisomerase 2 (1462 aa).

Residues Asn79, Asn108, 136–138 (SSN), and 149–156 (GRNGYGAK) each bind ATP. Residues 332-334 (NKK) form an interaction with DNA region. 365–367 (QTK) contributes to the ATP binding site. One can recognise a Toprim domain in the interval 442 to 556 (CTLILTEGDS…SLLKVPSFLV (115 aa)). Residues Glu448, Asp525, and Asp527 each contribute to the Mg(2+) site. A Topo IIA-type catalytic domain is found at 671 to 1131 (KDFVNKELIL…PTTSLWLKDL (461 aa)). Tyr761 (O-(5'-phospho-DNA)-tyrosine intermediate) is an active-site residue. The interval 947 to 956 (KLTSTISTSN) is interaction with DNA. 2 disordered regions span residues 1040-1077 (PMPRKGKSTKPQVAGANDDDSEEQEDAEPETASQSVSV) and 1147-1462 (EDDR…EDDD). Positions 1056-1068 (NDDDSEEQEDAEP) are enriched in acidic residues. Positions 1167 to 1181 (PAKKPPQPRKNTKKA) are enriched in basic residues. Positions 1198–1207 (AVEAAKPAEV) are enriched in low complexity. Over residues 1240–1250 (IESSGEKSQAM) the composition is skewed to polar residues. Positions 1260-1275 (AGKKQNNKRGGAKKKS) are enriched in basic residues. Residues 1282–1300 (SDSDNEVNDVDDDDDDFEE) show a composition bias toward acidic residues. Composition is skewed to low complexity over residues 1314 to 1334 (KPAAQNAKKAPAKAPAKAPAA) and 1419 to 1430 (APQPARARPQRA). A compositionally biased stretch (acidic residues) spans 1442 to 1462 (SESEEDSDEDAELSDFEEDDD).

Belongs to the type II topoisomerase family. Homodimer. Mg(2+) serves as cofactor. Mn(2+) is required as a cofactor. The cofactor is Ca(2+). Abundant in proliferative tissues.

It catalyses the reaction ATP-dependent breakage, passage and rejoining of double-stranded DNA.. Functionally, control of topological states of DNA by transient breakage and subsequent rejoining of DNA strands. Topoisomerase II makes double-strand breaks. The polypeptide is DNA topoisomerase 2 (TOP2) (Pisum sativum (Garden pea)).